Reading from the N-terminus, the 1099-residue chain is Carbamoyl phosphate synthase large chain (1099 aa).

A carboxyphosphate synthetic domain region spans residues 1 to 402; the sequence is MPRREDIKRI…ALGKALRSLE (402 aa). ATP is bound by residues Arg129, Arg169, Gly175, Gly176, Glu208, Val210, Glu215, Gly241, Ile242, His243, Gln285, and Glu299. Positions 133-328 constitute an ATP-grasp 1 domain; sequence KKTMEEAGLE…IAKIAALLAV (196 aa). 3 residues coordinate Mg(2+): Gln285, Glu299, and Asn301. Mn(2+) is bound by residues Gln285, Glu299, and Asn301. The tract at residues 403-541 is oligomerization domain; the sequence is LDAAPKLDLD…STYNGVENEA (139 aa). Positions 542 to 944 are carbamoyl phosphate synthetic domain; the sequence is IPTDKEKIMI…AFAKAEIAAG (403 aa). The 192-residue stretch at 666–857 folds into the ATP-grasp 2 domain; sequence AKLLKRIGLR…VAKIAAKIMV (192 aa). 10 residues coordinate ATP: Arg702, Lys741, Leu743, Glu748, Gly773, Val774, His775, Ser776, Gln816, and Glu828. Mg(2+) contacts are provided by Gln816, Glu828, and Asn830. Mn(2+) contacts are provided by Gln816, Glu828, and Asn830. The MGS-like domain occupies 945–1099; that stretch reads NPLPTEGAIL…VRKLTDTWKM (155 aa). The segment at 945 to 1099 is allosteric domain; it reads NPLPTEGAIL…VRKLTDTWKM (155 aa).

This sequence belongs to the CarB family. As to quaternary structure, composed of two chains; the small (or glutamine) chain promotes the hydrolysis of glutamine to ammonia, which is used by the large (or ammonia) chain to synthesize carbamoyl phosphate. Tetramer of heterodimers (alpha,beta)4. It depends on Mg(2+) as a cofactor. Mn(2+) is required as a cofactor.

The catalysed reaction is hydrogencarbonate + L-glutamine + 2 ATP + H2O = carbamoyl phosphate + L-glutamate + 2 ADP + phosphate + 2 H(+). The enzyme catalyses hydrogencarbonate + NH4(+) + 2 ATP = carbamoyl phosphate + 2 ADP + phosphate + 2 H(+). It functions in the pathway amino-acid biosynthesis; L-arginine biosynthesis; carbamoyl phosphate from bicarbonate: step 1/1. Its pathway is pyrimidine metabolism; UMP biosynthesis via de novo pathway; (S)-dihydroorotate from bicarbonate: step 1/3. Large subunit of the glutamine-dependent carbamoyl phosphate synthetase (CPSase). CPSase catalyzes the formation of carbamoyl phosphate from the ammonia moiety of glutamine, carbonate, and phosphate donated by ATP, constituting the first step of 2 biosynthetic pathways, one leading to arginine and/or urea and the other to pyrimidine nucleotides. The large subunit (synthetase) binds the substrates ammonia (free or transferred from glutamine from the small subunit), hydrogencarbonate and ATP and carries out an ATP-coupled ligase reaction, activating hydrogencarbonate by forming carboxy phosphate which reacts with ammonia to form carbamoyl phosphate. This chain is Carbamoyl phosphate synthase large chain, found in Thermotoga neapolitana (strain ATCC 49049 / DSM 4359 / NBRC 107923 / NS-E).